Consider the following 337-residue polypeptide: DNA-directed RNA polymerase subunit alpha (337 aa).

The interval 1–231 (MRNITTSAYT…KQLSVFDKIT (231 aa)) is alpha N-terminal domain (alpha-NTD). Positions 248–337 (NTKLLQNITD…IAELKAQNEG (90 aa)) are alpha C-terminal domain (alpha-CTD).

This sequence belongs to the RNA polymerase alpha chain family. In terms of assembly, homodimer. The RNAP catalytic core consists of 2 alpha, 1 beta, 1 beta' and 1 omega subunit. When a sigma factor is associated with the core the holoenzyme is formed, which can initiate transcription.

It carries out the reaction RNA(n) + a ribonucleoside 5'-triphosphate = RNA(n+1) + diphosphate. In terms of biological role, DNA-dependent RNA polymerase catalyzes the transcription of DNA into RNA using the four ribonucleoside triphosphates as substrates. This Campylobacter jejuni subsp. jejuni serotype O:6 (strain 81116 / NCTC 11828) protein is DNA-directed RNA polymerase subunit alpha.